Here is a 276-residue protein sequence, read N- to C-terminus: Putative ankyrin repeat protein R838 (276 aa).

ANK repeat units lie at residues 134 to 163 (DGDN…DPRS), 164 to 193 (DYDY…DISS), 195 to 223 (NHWP…DVRA), and 225 to 253 (NYNP…EIGS). The disordered stretch occupies residues 254–276 (VSDDDTYDSDSSDYSEDDSESIN). The span at 255 to 276 (SDDDTYDSDSSDYSEDDSESIN) shows a compositional bias: acidic residues.

This chain is Putative ankyrin repeat protein R838, found in Acanthamoeba polyphaga (Amoeba).